The following is a 336-amino-acid chain: Phosphoribosylformylglycinamidine cyclo-ligase (336 aa).

The protein belongs to the AIR synthase family.

Its subcellular location is the cytoplasm. The enzyme catalyses 2-formamido-N(1)-(5-O-phospho-beta-D-ribosyl)acetamidine + ATP = 5-amino-1-(5-phospho-beta-D-ribosyl)imidazole + ADP + phosphate + H(+). The protein operates within purine metabolism; IMP biosynthesis via de novo pathway; 5-amino-1-(5-phospho-D-ribosyl)imidazole from N(2)-formyl-N(1)-(5-phospho-D-ribosyl)glycinamide: step 2/2. The chain is Phosphoribosylformylglycinamidine cyclo-ligase from Thermoanaerobacter pseudethanolicus (strain ATCC 33223 / 39E) (Clostridium thermohydrosulfuricum).